A 270-amino-acid chain; its full sequence is Bacterial microcompartment shell protein PduB (270 aa).

2 BMC circularly permuted domains span residues 47–152 and 154–262; these read EFVG…DRTF and DVYA…GSEP.

This sequence belongs to the EutL/PduB family. Homotrimerizes to form a pseudohexamer with a central pore. The trimers pack into an array. Both forms interact with shell protein PduA. Post-translationally, in purified BMCs seen as a 30.0 kDa and 25.0 kDa form; the smaller form is called PduB'.

It is found in the bacterial microcompartment. It functions in the pathway polyol metabolism; 1,2-propanediol degradation. In terms of biological role, the two proteins produced are among the major shell proteins of the bacterial microcompartment (BMC) shell dedicated to 1,2-propanediol (1,2-PD) degradation. Overexpression of the gene gives large amorphous intracellular structures; when only PduB is overexpressed large circular bodies are observed which contain concentric rings, whereas with PduB' overexpression internal bodies with regular straight-lined structures were generated. The N-terminus of the long form (PduB) is required for correct formation of BMCs. May play a major role in binding the enzyme contents to the shell. Expression of a cosmid containing the full 21-gene pdu operon in E.coli allows E.coli to grow on 1,2-propanediol (1,2-PD) with the appearance of BMCs in its cytoplasm. Functionally, the 1,2-PD-specific bacterial microcompartment (BMC) concentrates low levels of 1,2-PD catabolic enzymes, concentrates volatile reaction intermediates thus enhancing pathway flux and keeps the level of toxic, mutagenic propionaldehyde low. This is Bacterial microcompartment shell protein PduB from Citrobacter freundii.